We begin with the raw amino-acid sequence, 548 residues long: Cytochrome P450 monooxygenase lcsK (548 aa).

A run of 2 helical transmembrane segments spans residues 28-48 (HAYP…LWAF) and 68-88 (VLLF…RLFF). 4 N-linked (GlcNAc...) asparagine glycosylation sites follow: N172, N223, N242, and N404. C487 provides a ligand contact to heme.

It belongs to the cytochrome P450 family. Requires heme as cofactor.

It is found in the membrane. It participates in secondary metabolite biosynthesis. Cytochrome P450 monooxygenase; part of the gene cluster that mediates the biosynthesis of the lipopeptide antibiotics leucinostatins that show extensive biological activities, including antimalarial, antiviral, antibacterial, antifungal, and antitumor activities, as well as phytotoxic. Leucinostatin A contains nine amino acid residues, including the unusual amino acid 4-methyl-L-proline (MePro), 2-amino-6-hydroxy-4-methyl-8-oxodecanoic acid (AHyMeOA), 3-hydroxyleucine (HyLeu), alpha-aminoisobutyric acid (AIB), beta-Ala, a 4-methylhex-2-enoic acid at the N-terminus as well as a N1,N1-dimethylpropane-1,2-diamine (DPD) at the C-terminus. The biosynthesis of leucinostatins is probably initiated with the assembly of 4-methylhex-2-enoic acid by a reducing PKS. Two reducing polyketide synthases, lcsB and lcsC, have been identified in the cluster and it is not clear which is the one that assembles 4-methylhex-2-enoic acid since both contain KS, AT, DH, cMT, ER, KR and ACP domains. The polyketide residue might be transferred to the NRPS lcsA, mediated by two additional enzymes, the acyl-CoA ligase lcsD and the thioesterase lcsE. The linear polyketide carboxylic acid, which is released from PKS, is converted to a CoA thioester by lcsD, and then lcsE hydrolyzes the thiol bond and shuttles the polyketide intermediate to lcsA. The C domain of the first module catalyzed the condensation of 4-methylhex-2-enoic acid and MePro carried by domain A1, followed by successive condensations of nine amino acids to trigger the elongation of the linear peptide. A5 and A6 domains of lcsA are proposed to incorporate leucine, A2 AHyMeOA, and A3 incorporates HyLeu. A4, A7 and A8 incorporate AIB. The AHyMeOA in leucinostatin A activated by the A2 might be produced by the second PKS (lcsB or lcsC) present within the cluster. The MePro is probably produced via leucine cyclization and may originate from a separate pathway, independent of the cluster. Another nonproteinogenic amino acid, beta-Ala, could be produced by an aspartic acid decarboxylase also localized outside of the cluster. Two candidates are VFPBJ_01400 and VFPBJ_10476. The final peptide scaffold may be released by the NAD(P)H-dependent thioester reductase (TE) at the C-terminal region of lcsA. Transamination of the lcsA product by the transaminase lcsP may produce DPD at the C-terminus. Further hydroxylation steps performed alternatively by the cytochrome P450 monooxygenases lcsI, lcsK and lcsN then yield the non-methylated leucinostatins precursor. It is also possible that leucines can be hydroxylated prior to their incorporation into the peptide. Varying extents of methylation then lead to the formation of leucinostatins A and B. The protein is Cytochrome P450 monooxygenase lcsK of Purpureocillium lilacinum (Paecilomyces lilacinus).